Consider the following 242-residue polypeptide: Ferritin, mitochondrial (242 aa).

The N-terminal 49 residues, Met1–Leu49, are a transit peptide targeting the mitochondrion. The span at Arg47–Pro58 shows a compositional bias: low complexity. The tract at residues Arg47–Asn71 is disordered. Positions Gln70–Gly219 constitute a Ferritin-like diiron domain. Fe cation is bound by residues Glu87, Glu122, His125, Glu167, and Gln201.

This sequence belongs to the ferritin family. Homooligomer of 24 subunits. The functional molecule is roughly spherical and contains a central cavity into which the polymeric mineral iron core is deposited. In terms of tissue distribution, detected in testis and erythroleukemia. Expression is very low or not detectable in brain, colon, heart, kidney, liver, lung, muscle, placental, spleen and small intestine.

The protein resides in the mitochondrion. The catalysed reaction is 4 Fe(2+) + O2 + 4 H(+) = 4 Fe(3+) + 2 H2O. Catalyzes the oxidation of ferrous iron(II) to ferric iron(III) and stores iron in a soluble, non-toxic, readily available form. Important for iron homeostasis. Iron is taken up in the ferrous form and deposited as ferric hydroxides after oxidation. This Homo sapiens (Human) protein is Ferritin, mitochondrial.